Consider the following 428-residue polypeptide: Dihydroorotase (428 aa).

Positions 59 and 61 each coordinate Zn(2+). Residues histidine 61 to arginine 63 and asparagine 93 each bind substrate. Zn(2+) contacts are provided by aspartate 151, histidine 178, and histidine 231. Asparagine 277 serves as a coordination point for substrate. Zn(2+) is bound at residue aspartate 304. Aspartate 304 is a catalytic residue. Substrate contacts are provided by residues histidine 308 and phenylalanine 322 to glycine 323.

It belongs to the metallo-dependent hydrolases superfamily. DHOase family. Class I DHOase subfamily. Zn(2+) is required as a cofactor.

It carries out the reaction (S)-dihydroorotate + H2O = N-carbamoyl-L-aspartate + H(+). The protein operates within pyrimidine metabolism; UMP biosynthesis via de novo pathway; (S)-dihydroorotate from bicarbonate: step 3/3. Functionally, catalyzes the reversible cyclization of carbamoyl aspartate to dihydroorotate. This Bacillus cereus (strain B4264) protein is Dihydroorotase.